The sequence spans 322 residues: Fructose-1,6-bisphosphatase class 1 3 (322 aa).

Residues E84, D103, L105, and D106 each coordinate Mg(2+). Residues 106–109 (DGSS), N198, and K262 each bind substrate. E268 is a Mg(2+) binding site.

Belongs to the FBPase class 1 family. In terms of assembly, homotetramer. It depends on Mg(2+) as a cofactor.

The protein resides in the cytoplasm. The catalysed reaction is beta-D-fructose 1,6-bisphosphate + H2O = beta-D-fructose 6-phosphate + phosphate. It functions in the pathway carbohydrate biosynthesis; gluconeogenesis. This chain is Fructose-1,6-bisphosphatase class 1 3, found in Pseudoalteromonas translucida (strain TAC 125).